Here is a 710-residue protein sequence, read N- to C-terminus: Proline-rich receptor-like protein kinase PERK13 (710 aa).

The tract at residues 1 to 229 (MSDSPTSSPP…SVPPPANSGG (229 aa)) is disordered. The Extracellular segment spans residues 1 to 235 (MSDSPTSSPP…NSGGGYQGKT (235 aa)). 4 stretches are compositionally biased toward pro residues: residues 7-21 (SSPPAPSADSAPPPD), 29-130 (APPP…PPPP), 137-151 (PPAPPPPEQLPPPAS), and 168-188 (ATSPPAPSAPATSPPAPPNAP). N-linked (GlcNAc...) asparagine glycosylation occurs at N191. The segment covering 209–220 (SPSRGVPSSGNS) has biased composition (low complexity). The chain crosses the membrane as a helical span at residues 236 to 256 (MAGFAIAGFAVIALMAVVFLV). Residues 257–710 (RRKKKRNIDA…ENRNFNNRRY (454 aa)) lie on the Cytoplasmic side of the membrane. Positions 289-334 (QNPTKGYSGPGGYNSQQQSNSGNSFGSQRGGGGYTRSGSAPDSAVM) are disordered. The span at 301 to 315 (YNSQQQSNSGNSFGS) shows a compositional bias: low complexity. Position 342 is a phosphothreonine (T342). Positions 353–619 (FSKHNILGEG…RHSGPKRPRM (267 aa)) constitute a Protein kinase domain. Residues 359-367 (LGEGGFGCV) and K381 contribute to the ATP site. Phosphotyrosine is present on Y426. D477 (proton acceptor) is an active-site residue. S510 is modified (phosphoserine). Phosphothreonine is present on residues T511 and T516. Y524 carries the post-translational modification Phosphotyrosine. Residues 676 to 710 (SGDYSVQDSRKGSNGASSEFTRNETENRNFNNRRY) form a disordered region.

Belongs to the protein kinase superfamily. Ser/Thr protein kinase family. As to quaternary structure, interacts with KIPK1 and KIPK2 (via its cytosolic domain). As to expression, mostly expressed in roots, especially in root hairs.

It localises to the cell membrane. The catalysed reaction is L-seryl-[protein] + ATP = O-phospho-L-seryl-[protein] + ADP + H(+). The enzyme catalyses L-threonyl-[protein] + ATP = O-phospho-L-threonyl-[protein] + ADP + H(+). Its function is as follows. Negatively regulates root hair elongation. This chain is Proline-rich receptor-like protein kinase PERK13 (PERK13), found in Arabidopsis thaliana (Mouse-ear cress).